Here is a 242-residue protein sequence, read N- to C-terminus: Adapter protein MecA (242 aa).

Belongs to the MecA family. In terms of assembly, homodimer.

Functionally, enables the recognition and targeting of unfolded and aggregated proteins to the ClpC protease or to other proteins involved in proteolysis. The chain is Adapter protein MecA from Streptococcus gordonii (strain Challis / ATCC 35105 / BCRC 15272 / CH1 / DL1 / V288).